A 179-amino-acid chain; its full sequence is Replication restart protein DnaT (179 aa).

The interval 156-179 (GGLPKRDVNTVSEPDSQIPPGFRG) is disordered.

The protein belongs to the DnaT family. In terms of assembly, homooligomerizes. Interacts with PriB. Component of the replication restart primosome. Primosome assembly occurs via a 'hand-off' mechanism. PriA binds to replication forks, subsequently PriB then DnaT bind; DnaT then displaces ssDNA to generate the helicase loading substrate.

Involved in the restart of stalled replication forks, which reloads the replicative helicase on sites other than the origin of replication. Can function in multiple replication restart pathways. Displaces ssDNA from a PriB-ssDNA complex. Probably forms a spiral filament on ssDNA. In Escherichia coli O17:K52:H18 (strain UMN026 / ExPEC), this protein is Replication restart protein DnaT.